We begin with the raw amino-acid sequence, 260 residues long: Mantle protein (260 aa).

The signal sequence occupies residues Met1–Ser16.

In terms of tissue distribution, prismatic layer of shell (at protein level). Expressed primarily in the mantle with highest level in the mantle edge and lower level in the mantle pallium.

It localises to the secreted. This Pinctada maxima (Silver-lipped pearl oyster) protein is Mantle protein.